A 358-amino-acid polypeptide reads, in one-letter code: Vascular endothelial growth factor D (358 aa).

The first 21 residues, Met1 to Gly21, serve as a signal peptide directing secretion. The propeptide occupies Phe22–Arg93. 3 disulfide bridges follow: Cys116–Cys158, Cys147–Cys194, and Cys151–Cys196. Residues Asn160 and Asn190 are each glycosylated (N-linked (GlcNAc...) asparagine). Positions Ser211 to Pro358 are excised as a propeptide. The 1; approximate repeat unit spans residues Cys227–Leu242. The 4 X 16 AA repeats of C-X(10)-C-X-C-X(1,3)-C stretch occupies residues Cys227–Cys323. 3 repeat units span residues Cys263–Cys278, Cys282–Cys298, and Cys306–Cys323. Asn292 carries an N-linked (GlcNAc...) asparagine glycan.

Belongs to the PDGF/VEGF growth factor family. Homodimer; non-covalent and antiparallel. Undergoes a complex proteolytic maturation which generates a variety of processed secreted forms with increased activity toward VEGFR-3 and VEGFR-2. VEGF-D first form an antiparallel homodimer linked by disulfide bonds before secretion. The fully processed VEGF-D is composed mostly of two VEGF homology domains (VHDs) bound by non-covalent interactions. Highly expressed in fetal and adult lung.

The protein resides in the secreted. Its function is as follows. Growth factor active in angiogenesis, lymphangiogenesis and endothelial cell growth, stimulating their proliferation and migration and also has effects on the permeability of blood vessels. May function in the formation of the venous and lymphatic vascular systems during embryogenesis, and also in the maintenance of differentiated lymphatic endothelium in adults. Binds and activates VEGFR-3 (Flt4) receptor. In Mus musculus (Mouse), this protein is Vascular endothelial growth factor D.